The sequence spans 510 residues: Metalloprotease TIKI homolog (510 aa).

The signal sequence occupies residues 1–30 (MQVKIVQVFPCLVLLVKLVLLSVLLPSATG). Over 31-489 (SYHCSNNATQ…FIPSASSGLR (459 aa)) the chain is Extracellular. N-linked (GlcNAc...) asparagine glycans are attached at residues Asn-37, Asn-98, Asn-108, Asn-141, Asn-223, Asn-281, Asn-322, Asn-383, and Asn-417. Over residues 435 to 471 (TSLNSATASTTVATPTSSVTPPTSSSSQTRSLTISDS) the composition is skewed to low complexity. The tract at residues 435 to 477 (TSLNSATASTTVATPTSSVTPPTSSSSQTRSLTISDSQRTSDD) is disordered. A helical membrane pass occupies residues 490-510 (YNIGLVCVTLFFVLLIITSAL).

The protein belongs to the TIKI family. It depends on Mn(2+) as a cofactor. Co(2+) serves as cofactor.

The protein resides in the membrane. Functionally, metalloprotease. This chain is Metalloprotease TIKI homolog, found in Amphimedon queenslandica (Sponge).